A 545-amino-acid chain; its full sequence is Membrane protein insertase YidC (545 aa).

4 consecutive transmembrane segments (helical) span residues 350 to 370, 424 to 444, 461 to 481, and 498 to 518; these read IIGN…AVLY, LPML…FASV, ADPY…QTYL, and PLVF…YWVV.

This sequence belongs to the OXA1/ALB3/YidC family. Type 1 subfamily. In terms of assembly, interacts with the Sec translocase complex via SecD. Specifically interacts with transmembrane segments of nascent integral membrane proteins during membrane integration.

It localises to the cell inner membrane. Its function is as follows. Required for the insertion and/or proper folding and/or complex formation of integral membrane proteins into the membrane. Involved in integration of membrane proteins that insert both dependently and independently of the Sec translocase complex, as well as at least some lipoproteins. Aids folding of multispanning membrane proteins. This chain is Membrane protein insertase YidC, found in Neisseria meningitidis serogroup B (strain ATCC BAA-335 / MC58).